The following is a 565-amino-acid chain: Transcription factor asqA (565 aa).

Residues 204-273 are fungal transcription factor domain; the sequence is MDTAMAQAVR…HSMPALCIDS (70 aa).

It is found in the nucleus. Its function is as follows. Transcription factor that regulates specifically the 4'-methoxyviridicatin/aspoquinolone biosynthesis cluster. This Emericella nidulans (strain FGSC A4 / ATCC 38163 / CBS 112.46 / NRRL 194 / M139) (Aspergillus nidulans) protein is Transcription factor asqA.